The following is a 143-amino-acid chain: uncharacterized protein (143 aa).

An N-terminal signal peptide occupies residues 1 to 24; the sequence is MKKMLMLAFTFLLALTIHVGEASA.

This is an uncharacterized protein from Bacillus subtilis (strain 168).